Consider the following 353-residue polypeptide: MSSKQPSLSYKDAGVDIDAGEALVERIKGVAKRTARPEVMGGLGGFGALCEIPAGYKQPVLVSGTDGVGTKLRLALNLNKHDSIGQDLVAMCVNDLVVCGAEPLFFLDYYATGKLNVDVAATVVTGIGAGCELAGCSLVGGETAEMPGMYEGEDYDLAGFCVGVVEKAEIIDGSRVQAGDALIALPSSGPHSNGYSLIRKIIEVSGADIEQVQLDGKPLADLLMAPTRIYVKPLLQLIKQTGAVKAMAHITGGGLLDNIPRVLPDNAQAVIDVASWNRPAVFDWLQEQGNVDETEMHRVLNCGVGMVICVAQSDAEKALEVLRAAGEQPWQIGRIETCGADAERVVLNNLKNH.

Belongs to the AIR synthase family.

The protein localises to the cytoplasm. It carries out the reaction 2-formamido-N(1)-(5-O-phospho-beta-D-ribosyl)acetamidine + ATP = 5-amino-1-(5-phospho-beta-D-ribosyl)imidazole + ADP + phosphate + H(+). It participates in purine metabolism; IMP biosynthesis via de novo pathway; 5-amino-1-(5-phospho-D-ribosyl)imidazole from N(2)-formyl-N(1)-(5-phospho-D-ribosyl)glycinamide: step 2/2. The chain is Phosphoribosylformylglycinamidine cyclo-ligase from Pseudomonas aeruginosa (strain LESB58).